The sequence spans 385 residues: Dual-specificity RNA methyltransferase RlmN (385 aa).

Catalysis depends on Glu113, which acts as the Proton acceptor. A Radical SAM core domain is found at 120–352 (VGRAGALCVS…NRAGYASPIR (233 aa)). The cysteines at positions 127 and 363 are disulfide-linked. Cys134, Cys138, and Cys141 together coordinate [4Fe-4S] cluster. S-adenosyl-L-methionine is bound by residues 189–190 (GE), Ser221, 243–245 (SLH), and Asn320. Cys363 (S-methylcysteine intermediate) is an active-site residue.

It belongs to the radical SAM superfamily. RlmN family. [4Fe-4S] cluster serves as cofactor.

The protein localises to the cytoplasm. It catalyses the reaction adenosine(2503) in 23S rRNA + 2 reduced [2Fe-2S]-[ferredoxin] + 2 S-adenosyl-L-methionine = 2-methyladenosine(2503) in 23S rRNA + 5'-deoxyadenosine + L-methionine + 2 oxidized [2Fe-2S]-[ferredoxin] + S-adenosyl-L-homocysteine. The catalysed reaction is adenosine(37) in tRNA + 2 reduced [2Fe-2S]-[ferredoxin] + 2 S-adenosyl-L-methionine = 2-methyladenosine(37) in tRNA + 5'-deoxyadenosine + L-methionine + 2 oxidized [2Fe-2S]-[ferredoxin] + S-adenosyl-L-homocysteine. In terms of biological role, specifically methylates position 2 of adenine 2503 in 23S rRNA and position 2 of adenine 37 in tRNAs. m2A2503 modification seems to play a crucial role in the proofreading step occurring at the peptidyl transferase center and thus would serve to optimize ribosomal fidelity. The protein is Dual-specificity RNA methyltransferase RlmN of Phenylobacterium zucineum (strain HLK1).